Reading from the N-terminus, the 223-residue chain is Protein phosphatase 1 regulatory subunit 3C (223 aa).

The CBM21 domain maps to 104–209 (REQLTRKLVC…NNDGKNYSLH (106 aa)).

Interacts with PPP1CC catalytic subunit of PP1 and associates with glycogen. Forms complexes with glycogen phosphorylase, glycogen synthase and phosphorylase kinase which is necessary for its regulation of PP1 activity.

In terms of biological role, acts as a glycogen-targeting subunit for PP1 and regulates its activity. Activates glycogen synthase, reduces glycogen phosphorylase activity and limits glycogen breakdown. This Xenopus tropicalis (Western clawed frog) protein is Protein phosphatase 1 regulatory subunit 3C.